The following is a 348-amino-acid chain: Fe(3+) ions import ATP-binding protein FbpC (348 aa).

The ABC transporter domain maps to 7–237 (VELRNVTKRF…PASRFMASFM (231 aa)). 39–46 (GPSGCGKT) contacts ATP.

It belongs to the ABC transporter superfamily. Fe(3+) ion importer (TC 3.A.1.10) family. In terms of assembly, the complex is composed of two ATP-binding proteins (FbpC), two transmembrane proteins (FbpB) and a solute-binding protein (FbpA).

It localises to the cell inner membrane. It carries out the reaction Fe(3+)(out) + ATP + H2O = Fe(3+)(in) + ADP + phosphate + H(+). Its function is as follows. Part of the ABC transporter complex FbpABC involved in Fe(3+) ions import. Responsible for energy coupling to the transport system. The chain is Fe(3+) ions import ATP-binding protein FbpC from Escherichia coli O157:H7.